We begin with the raw amino-acid sequence, 186 residues long: Low amplitude and bright protein LabA (186 aa).

Its function is as follows. Functions in an output pathway of the circadian clock. One of three clock output pathways. Involved in negative feedback regulation of KaiC; deletion leads to overexpression of KaiC protein and decreases the amplitude of the circadian response. Overexpression reduces the expression of circadian genes. The chain is Low amplitude and bright protein LabA from Synechococcus elongatus (strain ATCC 33912 / PCC 7942 / FACHB-805) (Anacystis nidulans R2).